Here is a 30-residue protein sequence, read N- to C-terminus: 136 kDa hydroxyproline-rich cell wall glycoprotein, major component (30 aa).

A 4-hydroxyproline mark is found at Pro8, Pro9, Pro10, Pro11, Pro12, Pro17, Pro18, Pro19, Pro20, Pro26, Pro27, Pro28, and Pro29.

In terms of processing, O-glycosylated.

The protein resides in the secreted. It is found in the cell wall. In Phaseolus vulgaris (Kidney bean), this protein is 136 kDa hydroxyproline-rich cell wall glycoprotein, major component.